We begin with the raw amino-acid sequence, 177 residues long: MALNLSQKQEVVAELADIAAKAHSLIAAEYAGITVSQMTAMRKQARETGVFLKVVKNTLAVRAVEGTDFAVAADKLVGPLLYAFSMEEPGAAGRLIKEFAKGNDKLQAKVVSIGGELFPASHVDVLASLPTLDQALAMLARVLSEPAAMFARAVKAVGDKQGGGDEAAAPVAETAEA.

The protein belongs to the universal ribosomal protein uL10 family. As to quaternary structure, part of the ribosomal stalk of the 50S ribosomal subunit. The N-terminus interacts with L11 and the large rRNA to form the base of the stalk. The C-terminus forms an elongated spine to which L12 dimers bind in a sequential fashion forming a multimeric L10(L12)X complex.

Forms part of the ribosomal stalk, playing a central role in the interaction of the ribosome with GTP-bound translation factors. The polypeptide is Large ribosomal subunit protein uL10 (Xanthomonas campestris pv. campestris (strain 8004)).